The chain runs to 309 residues: Lactamase-like protein aptB (309 aa).

Zn(2+) contacts are provided by His-97, His-99, Asp-101, and His-102. Asp-101 functions as the Proton donor/acceptor in the catalytic mechanism.

This sequence belongs to the metallo-beta-lactamase superfamily. Zn(2+) serves as cofactor.

The catalysed reaction is 2,3,6,8,9-pentahydroxy-1-oxo-3-(2-oxopropyl)-1,2,3,4-tetrahydroanthracene-2-carboxyl-[ACP] + H2O = 2,3,6,8,9-pentahydroxy-1-oxo-3-(2-oxopropyl)-1,2,3,4-tetrahydroanthracene-2-carboxylate + holo-[ACP] + H(+). Its pathway is secondary metabolite biosynthesis. Lactamase-like protein; part of the gene cluster that mediates the biosynthesis of asperthecin, an anthraquinone pigment. Polyketide synthase (PKS) aptA catalyzes the formation of the aromatic polyketide from acetyl coenzyme A and seven malonyl coenzyme A molecules. Polyketide is subsequently hydrolyzed by the action of aptB into endocrocin-9-anthrone. Endocrocin-9-anthrone is then oxidized into endocrocin by aptC. Endocrocin is likely to decarboxylate spontaneously to form emodin which explains why there is no decarboxylase in the asperthecin biosynthesis cluster. Finally, aptC or another endogenous oxygenase catalyzes additional oxidation steps to form asperthecin. The sequence is that of Lactamase-like protein aptB from Emericella nidulans (strain FGSC A4 / ATCC 38163 / CBS 112.46 / NRRL 194 / M139) (Aspergillus nidulans).